Consider the following 420-residue polypeptide: Gamma-glutamyl phosphate reductase (420 aa).

It belongs to the gamma-glutamyl phosphate reductase family.

The protein localises to the cytoplasm. The catalysed reaction is L-glutamate 5-semialdehyde + phosphate + NADP(+) = L-glutamyl 5-phosphate + NADPH + H(+). It functions in the pathway amino-acid biosynthesis; L-proline biosynthesis; L-glutamate 5-semialdehyde from L-glutamate: step 2/2. Functionally, catalyzes the NADPH-dependent reduction of L-glutamate 5-phosphate into L-glutamate 5-semialdehyde and phosphate. The product spontaneously undergoes cyclization to form 1-pyrroline-5-carboxylate. This Streptococcus pneumoniae (strain CGSP14) protein is Gamma-glutamyl phosphate reductase.